The following is a 641-amino-acid chain: Methylenetetrahydrofolate reductase 2 (641 aa).

The active-site Proton donor/acceptor is Glu20. NAD(+)-binding positions include 20–25 (EYFPPK) and 52–53 (TW). Residues 52 to 53 (TW), His81, 111 to 113 (RGD), Tyr153, Asp172, and Lys179 each bind FAD. A substrate-binding site is contributed by Asp113. Gln190 contacts substrate.

Belongs to the methylenetetrahydrofolate reductase family. It depends on FAD as a cofactor.

It carries out the reaction (6S)-5-methyl-5,6,7,8-tetrahydrofolate + NADP(+) = (6R)-5,10-methylene-5,6,7,8-tetrahydrofolate + NADPH + H(+). The protein operates within one-carbon metabolism; tetrahydrofolate interconversion. In terms of biological role, major methylenetetrahydrofolate reductase required to generate the methyl groups necessary for methionine synthetase to convert homocysteine to methionine. Performs 15 to 20 percent of the total methylenetetrahydrofolate reductase activity of the cells. The protein is Methylenetetrahydrofolate reductase 2 (met11) of Schizosaccharomyces pombe (strain 972 / ATCC 24843) (Fission yeast).